Here is a 234-residue protein sequence, read N- to C-terminus: Ribonuclease 3 (234 aa).

The 124-residue stretch at 13–136 (YITLEKALGY…LMAGVYLEAG (124 aa)) folds into the RNase III domain. Glu-49 is a Mg(2+) binding site. Residue Asp-53 is part of the active site. Mg(2+)-binding residues include Ser-122 and Glu-125. The active site involves Glu-125. One can recognise a DRBM domain in the interval 163-232 (DYKTALQELT…AYQALQKLKG (70 aa)).

The protein belongs to the ribonuclease III family. As to quaternary structure, homodimer. Mg(2+) serves as cofactor.

The protein resides in the cytoplasm. It carries out the reaction Endonucleolytic cleavage to 5'-phosphomonoester.. Its function is as follows. Digests double-stranded RNA. Involved in the processing of primary rRNA transcript to yield the immediate precursors to the large and small rRNAs (23S and 16S). Processes some mRNAs, and tRNAs when they are encoded in the rRNA operon. Processes pre-crRNA and tracrRNA of type II CRISPR loci if present in the organism. The chain is Ribonuclease 3 from Helicobacter acinonychis (strain Sheeba).